We begin with the raw amino-acid sequence, 139 residues long: Small ribosomal subunit protein bS16 (139 aa).

The tract at residues 85–108 (ESKSGKKPAKKATTKEASAKKPTD) is disordered. Residues 97–108 (TTKEASAKKPTD) are compositionally biased toward basic and acidic residues.

Belongs to the bacterial ribosomal protein bS16 family.

This chain is Small ribosomal subunit protein bS16, found in Leuconostoc mesenteroides subsp. mesenteroides (strain ATCC 8293 / DSM 20343 / BCRC 11652 / CCM 1803 / JCM 6124 / NCDO 523 / NBRC 100496 / NCIMB 8023 / NCTC 12954 / NRRL B-1118 / 37Y).